A 371-amino-acid polypeptide reads, in one-letter code: UDP-N-acetylglucosamine--N-acetylmuramyl-(pentapeptide) pyrophosphoryl-undecaprenol N-acetylglucosamine transferase (371 aa).

UDP-N-acetyl-alpha-D-glucosamine contacts are provided by residues 10-12, Asn-124, Arg-165, Ser-191, Ile-246, and Gln-291; that span reads TGG.

This sequence belongs to the glycosyltransferase 28 family. MurG subfamily.

Its subcellular location is the cell inner membrane. It catalyses the reaction di-trans,octa-cis-undecaprenyl diphospho-N-acetyl-alpha-D-muramoyl-L-alanyl-D-glutamyl-meso-2,6-diaminopimeloyl-D-alanyl-D-alanine + UDP-N-acetyl-alpha-D-glucosamine = di-trans,octa-cis-undecaprenyl diphospho-[N-acetyl-alpha-D-glucosaminyl-(1-&gt;4)]-N-acetyl-alpha-D-muramoyl-L-alanyl-D-glutamyl-meso-2,6-diaminopimeloyl-D-alanyl-D-alanine + UDP + H(+). It participates in cell wall biogenesis; peptidoglycan biosynthesis. Its function is as follows. Cell wall formation. Catalyzes the transfer of a GlcNAc subunit on undecaprenyl-pyrophosphoryl-MurNAc-pentapeptide (lipid intermediate I) to form undecaprenyl-pyrophosphoryl-MurNAc-(pentapeptide)GlcNAc (lipid intermediate II). The chain is UDP-N-acetylglucosamine--N-acetylmuramyl-(pentapeptide) pyrophosphoryl-undecaprenol N-acetylglucosamine transferase from Geobacter sp. (strain M21).